Reading from the N-terminus, the 93-residue chain is Small ribosomal subunit protein uS19 (93 aa).

This sequence belongs to the universal ribosomal protein uS19 family.

In terms of biological role, protein S19 forms a complex with S13 that binds strongly to the 16S ribosomal RNA. This chain is Small ribosomal subunit protein uS19, found in Mycobacterium tuberculosis (strain ATCC 25177 / H37Ra).